A 186-amino-acid chain; its full sequence is Ran guanine nucleotide release factor (186 aa).

The tract at residues 27 to 70 is interaction with RAN; it reads DLRPVPDNQEVFCHPVTDQSLIVELLELQAHVRGEAAARYHFED.

It belongs to the MOG1 family. As to quaternary structure, monomer. Interacts with RAN, both RAN-GTP and RAN-GDP. Competes with RCC1 for a common binding site on RAN and thereby inhibits RCC1-mediated nucleotide exchange. Forms a complex with RAN-GTP and RANBP1. Interacts with the cytoplasmic loop 2 of SCN5A. Isoform 1 and isoform 2 are ubiquitously expressed. Detected in heart and brain.

The protein localises to the nucleus. The protein resides in the cytoplasm. It is found in the perinuclear region. Its subcellular location is the cell membrane. In terms of biological role, may regulate the intracellular trafficking of RAN. Promotes guanine nucleotide release from RAN and inhibits binding of new GTP by preventing the binding of the RAN guanine nucleotide exchange factor RCC1. Regulates the levels of GTP-bound RAN in the nucleus, and thereby plays a role in the regulation of RAN-dependent mitotic spindle dynamics. Enhances the expression of SCN5A at the cell membrane in cardiomyocytes. The chain is Ran guanine nucleotide release factor (RANGRF) from Homo sapiens (Human).